The following is a 251-amino-acid chain: Flagellar basal-body rod protein FlgF (251 aa).

The protein belongs to the flagella basal body rod proteins family. The basal body constitutes a major portion of the flagellar organelle and consists of five rings (E,L,P,S, and M) mounted on a central rod. The rod consists of about 26 subunits of FlgG in the distal portion, and FlgB, FlgC and FlgF are thought to build up the proximal portion of the rod with about 6 subunits each.

The protein localises to the bacterial flagellum basal body. The chain is Flagellar basal-body rod protein FlgF (flgF) from Salmonella typhimurium (strain LT2 / SGSC1412 / ATCC 700720).